Here is a 397-residue protein sequence, read N- to C-terminus: Subtilisin-like protease 12 (397 aa).

An N-terminal signal peptide occupies residues 1 to 19 (MSIFKMMLIYFAILWVVNA). A propeptide spanning residues 20–116 (AQLLDIDPQG…VEPNKEMQVA (97 aa)) is cleaved from the precursor. One can recognise an Inhibitor I9 domain in the interval 35–115 (YIVVMKDRVS…FVEPNKEMQV (81 aa)). Asn-123, Asn-136, and Asn-150 each carry an N-linked (GlcNAc...) asparagine glycan. Residues 125–397 (TWGLSRISHK…NKLLYNGSGA (273 aa)) enclose the Peptidase S8 domain. Catalysis depends on charge relay system residues Asp-157 and His-188. 3 N-linked (GlcNAc...) asparagine glycosylation sites follow: Asn-249, Asn-305, and Asn-334. Ser-343 acts as the Charge relay system in catalysis. N-linked (GlcNAc...) asparagine glycosylation is found at Asn-385 and Asn-393.

Belongs to the peptidase S8 family.

It is found in the secreted. Its function is as follows. Secreted subtilisin-like serine protease with keratinolytic activity that contributes to pathogenicity. The sequence is that of Subtilisin-like protease 12 (SUB12) from Trichophyton verrucosum (strain HKI 0517).